A 134-amino-acid polypeptide reads, in one-letter code: Putative pre-16S rRNA nuclease (134 aa).

Belongs to the YqgF nuclease family.

Its subcellular location is the cytoplasm. Could be a nuclease involved in processing of the 5'-end of pre-16S rRNA. The chain is Putative pre-16S rRNA nuclease from Helicobacter pylori (strain P12).